We begin with the raw amino-acid sequence, 495 residues long: UDP-glycosyltransferase 73C9 (495 aa).

Residue Gly23–Ile26 coordinates UDP-alpha-D-glucose. His24 serves as the catalytic Proton acceptor. Asp129 serves as the catalytic Charge relay. UDP-alpha-D-glucose contacts are provided by residues Trp355–Gln358, His373–Glu381, and Asp397–Gln398.

The protein belongs to the UDP-glycosyltransferase family.

In terms of biological role, possesses very weak glucosyltransferase activity toward 2,4,5-trichlorophenol (TCP), when assayed with high concentrations of TCP. The chain is UDP-glycosyltransferase 73C9 from Barbarea vulgaris (Yellow rocket).